A 179-amino-acid polypeptide reads, in one-letter code: Inner membrane-spanning protein YciB (179 aa).

Helical transmembrane passes span 22 to 42, 50 to 70, 76 to 96, 121 to 141, and 149 to 169; these read IYAATAALIVATAIVLIYSWV, MALITFVLVVVFGGLTLFFHN, WKVTVIYALFAGALLVSQWVM, LAWAVFFILCGLANIYIAFWL, and FKVFGLTALTLIFTLLSGVYI.

This sequence belongs to the YciB family.

It localises to the cell inner membrane. Plays a role in cell envelope biogenesis, maintenance of cell envelope integrity and membrane homeostasis. The sequence is that of Inner membrane-spanning protein YciB from Escherichia fergusonii (strain ATCC 35469 / DSM 13698 / CCUG 18766 / IAM 14443 / JCM 21226 / LMG 7866 / NBRC 102419 / NCTC 12128 / CDC 0568-73).